A 152-amino-acid polypeptide reads, in one-letter code: Regulatory protein RecX (152 aa).

It belongs to the RecX family.

It is found in the cytoplasm. Functionally, modulates RecA activity. This chain is Regulatory protein RecX, found in Chromohalobacter salexigens (strain ATCC BAA-138 / DSM 3043 / CIP 106854 / NCIMB 13768 / 1H11).